Here is a 384-residue protein sequence, read N- to C-terminus: NAD-capped RNA hydrolase NPY1 (384 aa).

Zn(2+) contacts are provided by cysteine 179, cysteine 182, cysteine 197, and cysteine 206. The region spanning 219–351 is the Nudix hydrolase domain; it reads PRTDPTVIIA…AGGYRVPFKN (133 aa). Residues alanine 256, glutamate 272, glutamate 276, and glutamate 322 each coordinate Mg(2+). Residues 256-258, glutamate 272, glutamate 276, and glutamate 322 each bind substrate; that span reads AGF. The Nudix box signature appears at 257–278; the sequence is GFMEPSETIEEACIREIWEETG. Positions 378 to 380 match the Microbody targeting signal motif; that stretch reads KTS.

Belongs to the Nudix hydrolase family. NudC subfamily. In terms of assembly, homodimer. Mg(2+) serves as cofactor. The cofactor is Zn(2+).

It is found in the peroxisome. The enzyme catalyses a 5'-end NAD(+)-phospho-ribonucleoside in mRNA + H2O = a 5'-end phospho-adenosine-phospho-ribonucleoside in mRNA + beta-nicotinamide D-ribonucleotide + 2 H(+). The catalysed reaction is NAD(+) + H2O = beta-nicotinamide D-ribonucleotide + AMP + 2 H(+). It catalyses the reaction NADH + H2O = reduced beta-nicotinamide D-ribonucleotide + AMP + 2 H(+). MRNA decapping enzyme that specifically removes the nicotinamide adenine dinucleotide (NAD) cap from a subset of mRNAs by hydrolyzing the diphosphate linkage to produce nicotinamide mononucleotide (NMN) and 5' monophosphate mRNA. The NAD-cap is present at the 5'-end of some RNAs; in contrast to the canonical N7 methylguanosine (m7G) cap, the NAD cap promotes mRNA decay. Mediates the hydrolysis of some nucleoside diphosphate derivatives. The chain is NAD-capped RNA hydrolase NPY1 from Saccharomyces cerevisiae (strain ATCC 204508 / S288c) (Baker's yeast).